The sequence spans 240 residues: Ribosome maturation protein SDO1 homolog (240 aa).

The protein belongs to the SDO1/SBDS family.

The chain is Ribosome maturation protein SDO1 homolog from Methanocaldococcus jannaschii (strain ATCC 43067 / DSM 2661 / JAL-1 / JCM 10045 / NBRC 100440) (Methanococcus jannaschii).